Here is a 463-residue protein sequence, read N- to C-terminus: Interferon-inducible GTPase 5 (463 aa).

The region spanning 53 to 235 (IRLEVGVTGE…PTLVSTWEHD (183 aa)) is the IRG-type G domain. GTP contacts are provided by residues 62–69 (ESGAGKSS), 87–91 (TGVME), 169–171 (KVD), and 216–218 (SNL). Residues Ser-247 and Ser-304 each carry the phosphoserine modification. The interval 404 to 437 (LEDDEPQPEVSLEVASDNGVEKGGSGEGGGEEAP) is disordered.

It belongs to the TRAFAC class dynamin-like GTPase superfamily. IRG family. Abundantly expressed in semen (at protein level).

Its subcellular location is the cell projection. It localises to the cilium. The protein resides in the flagellum. The protein localises to the lipid droplet. The catalysed reaction is GTP + H2O = GDP + phosphate + H(+). Its function is as follows. Required for sperm motility and therefore male fertility, via positive regulation of spermatozoa fibrous sheath formation. This Homo sapiens (Human) protein is Interferon-inducible GTPase 5.